A 307-amino-acid chain; its full sequence is tRNA-cytidine(32) 2-sulfurtransferase (307 aa).

Positions 44–49 (SGGKDS) match the PP-loop motif motif. Residues Cys119, Cys122, and Cys210 each contribute to the [4Fe-4S] cluster site.

Belongs to the TtcA family. As to quaternary structure, homodimer. It depends on Mg(2+) as a cofactor. [4Fe-4S] cluster serves as cofactor.

It is found in the cytoplasm. The enzyme catalyses cytidine(32) in tRNA + S-sulfanyl-L-cysteinyl-[cysteine desulfurase] + AH2 + ATP = 2-thiocytidine(32) in tRNA + L-cysteinyl-[cysteine desulfurase] + A + AMP + diphosphate + H(+). It functions in the pathway tRNA modification. Its function is as follows. Catalyzes the ATP-dependent 2-thiolation of cytidine in position 32 of tRNA, to form 2-thiocytidine (s(2)C32). The sulfur atoms are provided by the cysteine/cysteine desulfurase (IscS) system. This chain is tRNA-cytidine(32) 2-sulfurtransferase, found in Aliivibrio fischeri (strain ATCC 700601 / ES114) (Vibrio fischeri).